Consider the following 505-residue polypeptide: MASGRRAPRTGLLELRAGAGSGAGGERWQRAVLSLEEDALTVSPADGEPGPEPGAQREPEPAQLNGAAEPGAASPPLPEALLLQPRRVTVRKADAGGLGISIKGGRENKMPILISKIFKGLAADQTEALFVGDAILSVNGEDLSSATHDEAVQVLKKTGKEVVLEVKYMKEVSPYFKNSASGTSVGWDSPPASPLQRQPSSPGPPPRDLRDAKHMSLKMAYVSRRCTPTDPETRYLEICSADGRDTLFLRAKDEASAKSWAAAIQAQVNTLTPRVKDELQALLSATSTAGSQDIKRIGWLTEQLPSGGTAPTLALLTEKELLLYSCLPQTREALSRPARTAPLITTRLVHSGPSKGSVPYDAELSFALRTGTRHGVDTHLFSVESPQELAAWTRQLVDGCHRAAEGVQEVSTACTWNGRACSLSVHIDNGFTLWAAEPGAARAVLLRQPFEKLQMSSDDGASLLFLDFGGAEGEIQLDLHSCPKTMVFIIHSFLSAKVTRLGLLA.

Residues 1 to 77 (MASGRRAPRT…AEPGAASPPL (77 aa)) are disordered. PH domains lie at 6–269 (RAPR…AQVN) and 293–401 (DIKR…DGCH). Residues 87–170 (RVTVRKADAG…EVVLEVKYMK (84 aa)) enclose the PDZ domain. 5 positions are modified to phosphoserine: serine 101, serine 184, serine 189, serine 193, and serine 200. A disordered region spans residues 180–211 (ASGTSVGWDSPPASPLQRQPSSPGPPPRDLRD). The 57-residue stretch at 449–505 (PFEKLQMSSDDGASLLFLDFGGAEGEIQLDLHSCPKTMVFIIHSFLSAKVTRLGLLA) folds into the SU domain. The tract at residues 483-505 (PKTMVFIIHSFLSAKVTRLGLLA) is calmodulin-binding.

This sequence belongs to the syntrophin family. In terms of assembly, monomer and homodimer. Interacts with the dystrophin related protein DTNA; SGCG of the dystrophin glycoprotein complex; NOS1; GRB2; GA; TGFA; MAPK12 and the sodium channel proteins SCN4A and SCN5A. Interacts with the dystrophin protein DMD in a calmodulin dependent manner and with related protein UTRN; SGCA of the dystrophin glycoprotein complex; F-actin; calmodulin and with the other members of the syntrophin family SNTB1 and SNTB2. Interacts with MYOC; regulates muscle hypertrophy. Interacts with DTNB. Phosphorylated by CaM-kinase II. Phosphorylation may inhibit the interaction with DMD.

It is found in the cell membrane. The protein resides in the sarcolemma. Its subcellular location is the cell junction. The protein localises to the cytoplasm. It localises to the cytoskeleton. Adapter protein that binds to and probably organizes the subcellular localization of a variety of membrane proteins. May link various receptors to the actin cytoskeleton and the extracellular matrix via the dystrophin glycoprotein complex. Plays an important role in synapse formation and in the organization of UTRN and acetylcholine receptors at the neuromuscular synapse. Binds to phosphatidylinositol 4,5-bisphosphate. The polypeptide is Alpha-1-syntrophin (SNTA1) (Bos taurus (Bovine)).